The primary structure comprises 148 residues: Arginine repressor (148 aa).

It belongs to the ArgR family.

It localises to the cytoplasm. It participates in amino-acid biosynthesis; L-arginine biosynthesis [regulation]. Regulates arginine biosynthesis genes. The protein is Arginine repressor of Prosthecochloris aestuarii (strain DSM 271 / SK 413).